Consider the following 103-residue polypeptide: N(4)-acetylcytidine amidohydrolase (103 aa).

One can recognise an ASCH domain in the interval 7 to 93 (TFFERFEQDI…VIAEIYPGLE (87 aa)). Lysine 21 (proton acceptor) is an active-site residue. Threonine 24 serves as the catalytic Nucleophile. Glutamate 74 (proton donor) is an active-site residue.

It belongs to the N(4)-acetylcytidine amidohydrolase family.

It catalyses the reaction N(4)-acetylcytidine + H2O = cytidine + acetate + H(+). The catalysed reaction is N(4)-acetyl-2'-deoxycytidine + H2O = 2'-deoxycytidine + acetate + H(+). It carries out the reaction N(4)-acetylcytosine + H2O = cytosine + acetate + H(+). Its function is as follows. Catalyzes the hydrolysis of N(4)-acetylcytidine (ac4C). The sequence is that of N(4)-acetylcytidine amidohydrolase from Shewanella putrefaciens (strain CN-32 / ATCC BAA-453).